The following is a 245-amino-acid chain: tRNA pseudouridine synthase A 2 (245 aa).

The active-site Nucleophile is aspartate 53. Tyrosine 111 lines the substrate pocket.

Belongs to the tRNA pseudouridine synthase TruA family. As to quaternary structure, homodimer.

It carries out the reaction uridine(38/39/40) in tRNA = pseudouridine(38/39/40) in tRNA. In terms of biological role, formation of pseudouridine at positions 38, 39 and 40 in the anticodon stem and loop of transfer RNAs. This is tRNA pseudouridine synthase A 2 from Bacillus cereus (strain ATCC 10987 / NRS 248).